Here is a 364-residue protein sequence, read N- to C-terminus: Protein Wnt-6 (364 aa).

The first 23 residues, 1-23, serve as a signal peptide directing secretion; that stretch reads MLPPVPSRLGLLLLLLCPAHVDG. 11 disulfide bridges follow: Cys-75–Cys-86, Cys-123–Cys-131, Cys-133–Cys-171, Cys-221–Cys-235, Cys-223–Cys-230, Cys-293–Cys-324, Cys-309–Cys-319, Cys-323–Cys-363, Cys-339–Cys-354, Cys-341–Cys-351, and Cys-346–Cys-347. A glycan (N-linked (GlcNAc...) asparagine) is linked at Asn-85. The disordered stretch occupies residues 140-162; the sequence is APPRPSGLLGTPGPPGPTGSPDA. Ser-227 carries O-palmitoleoyl serine; by PORCN lipidation. Asn-310 carries N-linked (GlcNAc...) asparagine glycosylation.

Belongs to the Wnt family. Interacts with PORCN. Palmitoleoylation is required for efficient binding to frizzled receptors. Depalmitoleoylation leads to Wnt signaling pathway inhibition. As to expression, detected in ileum, colon and stomach (at protein level).

It localises to the secreted. The protein localises to the extracellular space. It is found in the extracellular matrix. Ligand for members of the frizzled family of seven transmembrane receptors. Probable developmental protein. May be a signaling molecule which affects the development of discrete regions of tissues. Is likely to signal over only few cell diameters. The sequence is that of Protein Wnt-6 (Wnt6) from Mus musculus (Mouse).